The sequence spans 506 residues: Probable cytochrome P450 309a1 (506 aa).

Phosphothreonine occurs at positions 75, 78, and 81. Cys-452 lines the heme pocket.

It belongs to the cytochrome P450 family. Heme is required as a cofactor.

The protein resides in the endoplasmic reticulum membrane. The protein localises to the microsome membrane. May be involved in the metabolism of insect hormones and in the breakdown of synthetic insecticides. In Drosophila melanogaster (Fruit fly), this protein is Probable cytochrome P450 309a1 (Cyp309a1).